Consider the following 470-residue polypeptide: Flotillin-like protein 1 (470 aa).

Cys35 is lipidated: S-palmitoyl cysteine. The stretch at 305–354 forms a coiled coil; the sequence is EYETKVQEANWELYNKQKQAEAVLYEKQKQAEAQKAQADAAFYSKQKEAE.

Belongs to the band 7/mec-2 family. Flotillin subfamily. In terms of processing, may be palmitoylated.

The protein localises to the cell membrane. The protein resides in the membrane. It is found in the caveola. May act as a scaffolding protein within caveolar membranes, functionally participating in formation of caveolae or caveolae-like vesicles. The chain is Flotillin-like protein 1 (FLOT1) from Arabidopsis thaliana (Mouse-ear cress).